A 208-amino-acid chain; its full sequence is Thymidylate kinase (208 aa).

11 to 18 (GGEGAGKS) contacts ATP.

Belongs to the thymidylate kinase family.

The catalysed reaction is dTMP + ATP = dTDP + ADP. Its function is as follows. Phosphorylation of dTMP to form dTDP in both de novo and salvage pathways of dTTP synthesis. This is Thymidylate kinase (tmk) from Caulobacter vibrioides (strain ATCC 19089 / CIP 103742 / CB 15) (Caulobacter crescentus).